Consider the following 226-residue polypeptide: Leucyl/phenylalanyl-tRNA--protein transferase (226 aa).

The protein belongs to the L/F-transferase family.

It localises to the cytoplasm. It carries out the reaction N-terminal L-lysyl-[protein] + L-leucyl-tRNA(Leu) = N-terminal L-leucyl-L-lysyl-[protein] + tRNA(Leu) + H(+). The catalysed reaction is N-terminal L-arginyl-[protein] + L-leucyl-tRNA(Leu) = N-terminal L-leucyl-L-arginyl-[protein] + tRNA(Leu) + H(+). The enzyme catalyses L-phenylalanyl-tRNA(Phe) + an N-terminal L-alpha-aminoacyl-[protein] = an N-terminal L-phenylalanyl-L-alpha-aminoacyl-[protein] + tRNA(Phe). Functionally, functions in the N-end rule pathway of protein degradation where it conjugates Leu, Phe and, less efficiently, Met from aminoacyl-tRNAs to the N-termini of proteins containing an N-terminal arginine or lysine. The chain is Leucyl/phenylalanyl-tRNA--protein transferase from Pseudomonas fluorescens (strain ATCC BAA-477 / NRRL B-23932 / Pf-5).